We begin with the raw amino-acid sequence, 489 residues long: Coronin-1B (489 aa).

At S2 the chain carries Phosphoserine; by PKC. WD repeat units lie at residues Q18–D72, K73–T122, E123–E166, E167–L210, V211–E256, and E257–E296. A disordered region spans residues R408–L444. A compositionally biased stretch (low complexity) spans A428–S441. Residues E449 to I474 are a coiled coil.

Belongs to the WD repeat coronin family. In terms of assembly, forms homooligomers, but does not form complexes with the other coronins. Interacts with Arp2/3 complex components, including ACTR2, ARPC1B and ARPC2. Binds actin. In terms of processing, phosphorylation by PKC on Ser-2 regulates the interaction with the Arp2/3 complex and cell motility in fibroblasts. Phosphorylation does not seem to affect subcellular location.

It localises to the cytoplasm. It is found in the cytoskeleton. The protein resides in the stress fiber. Functionally, regulates leading edge dynamics and cell motility in fibroblasts. May be involved in cytokinesis and signal transduction. This chain is Coronin-1B (CORO1B), found in Homo sapiens (Human).